The sequence spans 195 residues: Cytochrome c oxidase assembly protein CtaG (195 aa).

At 1–7 (MSGGKPR) the chain is on the cytoplasmic side. A helical; Signal-anchor for type II membrane protein membrane pass occupies residues 8-30 (SNTRTVAMLAGVVVLMGALSWAA). Over 31–195 (VPFYSWFCKV…LDAKTEPTVN (165 aa)) the chain is Periplasmic.

This sequence belongs to the COX11/CtaG family.

The protein localises to the cell inner membrane. Its function is as follows. Exerts its effect at some terminal stage of cytochrome c oxidase synthesis, probably by being involved in the insertion of the copper B into subunit I. The chain is Cytochrome c oxidase assembly protein CtaG from Paracoccus denitrificans (strain Pd 1222).